Here is a 207-residue protein sequence, read N- to C-terminus: Lipid A acyltransferase PagP (207 aa).

The first 24 residues, 1–24 (MKFDLTAACTLSATLLVSSGTVFA), serve as a signal peptide directing secretion. Catalysis depends on residues His-79, Asp-122, and Ser-123.

The protein belongs to the lipid A palmitoyltransferase family. In terms of assembly, homodimer.

The protein resides in the cell outer membrane. The enzyme catalyses a lipid A + a 1,2-diacyl-sn-glycero-3-phosphocholine = a hepta-acyl lipid A + a 2-acyl-sn-glycero-3-phosphocholine. It catalyses the reaction a lipid IVA + a 1,2-diacyl-sn-glycero-3-phosphocholine = a lipid IVB + a 2-acyl-sn-glycero-3-phosphocholine. It carries out the reaction a lipid IIA + a 1,2-diacyl-sn-glycero-3-phosphocholine = a lipid IIB + a 2-acyl-sn-glycero-3-phosphocholine. Functionally, transfers a fatty acid residue from the sn-1 position of a phospholipid to the N-linked hydroxyfatty acid chain on the proximal unit of lipid A or its precursors. This Photorhabdus laumondii subsp. laumondii (strain DSM 15139 / CIP 105565 / TT01) (Photorhabdus luminescens subsp. laumondii) protein is Lipid A acyltransferase PagP.